Consider the following 731-residue polypeptide: Catalase-peroxidase (731 aa).

Residues 1-24 (MSTEPNCPFSGNARKHTAAGAPSN) are disordered. Residues 96 to 219 (WHSAGTYRVS…LGAVQMGLIY (124 aa)) constitute a cross-link (tryptophyl-tyrosyl-methioninium (Trp-Tyr) (with M-245)). Histidine 97 (proton acceptor) is an active-site residue. The tryptophyl-tyrosyl-methioninium (Tyr-Met) (with W-96) cross-link spans 219–245 (YVNPEGPNGNPDPIAAARDIRETFARM). Histidine 260 contacts heme b. The disordered stretch occupies residues 339–365 (GAQQWKPKGDAGAGTVPDAHDPSKRHA).

It belongs to the peroxidase family. Peroxidase/catalase subfamily. In terms of assembly, homodimer or homotetramer. Requires heme b as cofactor. Post-translationally, formation of the three residue Trp-Tyr-Met cross-link is important for the catalase, but not the peroxidase activity of the enzyme.

It carries out the reaction H2O2 + AH2 = A + 2 H2O. The enzyme catalyses 2 H2O2 = O2 + 2 H2O. Its function is as follows. Bifunctional enzyme with both catalase and broad-spectrum peroxidase activity. The sequence is that of Catalase-peroxidase from Polaromonas sp. (strain JS666 / ATCC BAA-500).